The primary structure comprises 364 residues: Transcription factor SPEECHLESS (364 aa).

A disordered region spans residues 35-109 (GEISPTAAST…QKMSHVTVER (75 aa)). Position 38 is a phosphoserine; by ASK7 (Ser38). Thr40 is subject to Phosphothreonine; by ASK7. The span at 40 to 53 (TAASTPKDGTTSSK) shows a compositional bias: polar residues. Phosphoserine; by ASK7 is present on Ser43. The residue at position 44 (Thr44) is a Phosphothreonine; by ASK7. A Phosphoserine; by ASK7 modification is found at Ser65. Positions 79–92 (EDEEEEDGDGEAEE) are enriched in acidic residues. The basic motif stretch occupies residues 99–112 (QQKMSHVTVERNRR). The bHLH domain occupies 99–150 (QQKMSHVTVERNRRKQMNEHLTVLRSLMPCFYVKRGDQASIIGGVVEYISEL). The tract at residues 113-150 (KQMNEHLTVLRSLMPCFYVKRGDQASIIGGVVEYISEL) is helix-loop-helix motif. Residue Ser171 is modified to Phosphoserine; by ASK7. Positions 171–227 (SPRVVPSPRPSPPVLSPRKPPLSPRINHHQIHHHLLLPPISPRTPQPTSPYRAIPPQ) are disordered. Pro residues predominate over residues 175 to 193 (VPSPRPSPPVLSPRKPPLS). Ser177 bears the Phosphoserine; by ASK7, MPK3 and MPK6 mark. Ser181 carries the post-translational modification Phosphoserine; by ASK7. Phosphoserine; by CDKA-1, ASK7, MPK3 and MPK6 is present on Ser186. The residue at position 193 (Ser193) is a Phosphoserine; by MPK3 and MPK6. Residues 196-205 (INHHQIHHHL) show a composition bias toward basic residues. The segment covering 209–218 (PISPRTPQPT) has biased composition (pro residues). Phosphoserine; by MPK3 and MPK6 is present on Ser211. The residue at position 214 (Thr214) is a Phosphothreonine; by ASK7, MPK3 and MPK6. Ser219 carries the post-translational modification Phosphoserine; by ASK7, MPK3 and MPK6.

In terms of assembly, homodimer. Forms dimers with SCRM and SCRM2. May interact with CDKA-1. Post-translationally, phosphorylated by ASK7/BIN2 and ASK3/SK12; this post-translational modification inhibits activity and limit epidermal cell proliferation. Phosphorylation by MPK3 and MPK6 leads to the inhibition of stomatal fate and to degradation. Stabilized by CDKA-1-mediated phosphorylation at Ser-186 which promotes stomatal development. As to expression, expressed in developing leaf epidermis. Reduced accumulation in the stomatal lineage ground cells (SLGCs) where BASL is polarized in the cell cortex. Observed in small cells of non-protruding hypocotyl cell files and of developing cotyledon epidermis. Restricted to meristemoids (stomatal precursor cell) in leaves epidermis, mostly in dividing cells of non-protruding cell files.

The protein localises to the nucleus. Negatively regulated through phosphorylation by the MAPK module. Activity is constrained by polarized BASL in stomatal lineage ground cells (SLGCs) undergoing ACD. Transcription factor acting as an integration node for stomata and brassinosteroid (BR) signaling pathways to control stomatal initiation and development. Activates transcription when in the presence of SCRM/ICE1. Functions as a dimer with SCRM or SCRM2 during stomatal initiation. Required for the initiation, the spacing and the formation of stomata, by promoting the first asymmetric cell divisions. Together with FMA and MUTE, modulates the stomata formation. Involved in the regulation of growth reduction under osmotic stress (e.g. mannitol), associated with a quick decrease of meristemoid mother cells (MMCs) number lower stomatal index and density. This is Transcription factor SPEECHLESS from Arabidopsis thaliana (Mouse-ear cress).